Reading from the N-terminus, the 800-residue chain is Phenylalanine--tRNA ligase beta subunit (800 aa).

The 116-residue stretch at 39-154 (TKDIKNLVVG…EAQVPGTDAL (116 aa)) folds into the tRNA-binding domain. Residues 408-483 (AFITPIDITA…RIYGYDDIPS (76 aa)) enclose the B5 domain. Mg(2+)-binding residues include Asp-461, Asp-467, Glu-470, and Glu-471. The region spanning 708 to 800 (PRFPGMSRDI…ALIEQGAVIR (93 aa)) is the FDX-ACB domain.

This sequence belongs to the phenylalanyl-tRNA synthetase beta subunit family. Type 1 subfamily. As to quaternary structure, tetramer of two alpha and two beta subunits. Mg(2+) is required as a cofactor.

It localises to the cytoplasm. It carries out the reaction tRNA(Phe) + L-phenylalanine + ATP = L-phenylalanyl-tRNA(Phe) + AMP + diphosphate + H(+). This Staphylococcus aureus (strain COL) protein is Phenylalanine--tRNA ligase beta subunit.